The following is a 490-amino-acid chain: Betaine aldehyde dehydrogenase (490 aa).

Residue aspartate 93 coordinates K(+). 150–152 (GAW) provides a ligand contact to NAD(+). Catalysis depends on lysine 162, which acts as the Charge relay system. 176–179 (KPSE) lines the NAD(+) pocket. Valine 180 contacts K(+). Residue 230-233 (GIAS) participates in NAD(+) binding. Residue leucine 246 coordinates K(+). Residue glutamate 252 is the Proton acceptor of the active site. Glycine 254, cysteine 286, and glutamate 387 together coordinate NAD(+). Catalysis depends on cysteine 286, which acts as the Nucleophile. A Cysteine sulfenic acid (-SOH) modification is found at cysteine 286. Positions 457 and 460 each coordinate K(+). Glutamate 464 acts as the Charge relay system in catalysis.

This sequence belongs to the aldehyde dehydrogenase family. In terms of assembly, dimer of dimers. It depends on K(+) as a cofactor.

The enzyme catalyses betaine aldehyde + NAD(+) + H2O = glycine betaine + NADH + 2 H(+). It participates in amine and polyamine biosynthesis; betaine biosynthesis via choline pathway; betaine from betaine aldehyde: step 1/1. Its function is as follows. Involved in the biosynthesis of the osmoprotectant glycine betaine. Catalyzes the irreversible oxidation of betaine aldehyde to the corresponding acid. The polypeptide is Betaine aldehyde dehydrogenase (Pectobacterium atrosepticum (strain SCRI 1043 / ATCC BAA-672) (Erwinia carotovora subsp. atroseptica)).